The sequence spans 357 residues: N-acetyl-gamma-glutamyl-phosphate reductase (357 aa).

Residue C160 is part of the active site.

The protein belongs to the NAGSA dehydrogenase family. Type 1 subfamily.

It is found in the cytoplasm. The enzyme catalyses N-acetyl-L-glutamate 5-semialdehyde + phosphate + NADP(+) = N-acetyl-L-glutamyl 5-phosphate + NADPH + H(+). The protein operates within amino-acid biosynthesis; L-arginine biosynthesis; N(2)-acetyl-L-ornithine from L-glutamate: step 3/4. In terms of biological role, catalyzes the NADPH-dependent reduction of N-acetyl-5-glutamyl phosphate to yield N-acetyl-L-glutamate 5-semialdehyde. In Prochlorococcus marinus (strain MIT 9313), this protein is N-acetyl-gamma-glutamyl-phosphate reductase.